Reading from the N-terminus, the 181-residue chain is Oligoribonuclease (181 aa).

The region spanning 8 to 171 (LIWIDMEMTG…ADIYDSIEEL (164 aa)) is the Exonuclease domain. Y129 is an active-site residue.

The protein belongs to the oligoribonuclease family.

It localises to the cytoplasm. Its function is as follows. 3'-to-5' exoribonuclease specific for small oligoribonucleotides. In Nitrosomonas europaea (strain ATCC 19718 / CIP 103999 / KCTC 2705 / NBRC 14298), this protein is Oligoribonuclease.